The sequence spans 156 residues: Ribosomal RNA large subunit methyltransferase H (156 aa).

S-adenosyl-L-methionine is bound by residues leucine 73, glycine 104, and leucine 123 to leucine 128.

The protein belongs to the RNA methyltransferase RlmH family. In terms of assembly, homodimer.

It localises to the cytoplasm. It catalyses the reaction pseudouridine(1915) in 23S rRNA + S-adenosyl-L-methionine = N(3)-methylpseudouridine(1915) in 23S rRNA + S-adenosyl-L-homocysteine + H(+). In terms of biological role, specifically methylates the pseudouridine at position 1915 (m3Psi1915) in 23S rRNA. The chain is Ribosomal RNA large subunit methyltransferase H from Vibrio vulnificus (strain CMCP6).